Here is a 370-residue protein sequence, read N- to C-terminus: N-acetyldiaminopimelate deacetylase (370 aa).

Aspartate 67 is a catalytic residue. Glutamate 126 serves as the catalytic Proton acceptor.

The protein belongs to the peptidase M20A family. N-acetyldiaminopimelate deacetylase subfamily.

The enzyme catalyses N-acetyl-(2S,6S)-2,6-diaminopimelate + H2O = (2S,6S)-2,6-diaminopimelate + acetate. It functions in the pathway amino-acid biosynthesis; L-lysine biosynthesis via DAP pathway; LL-2,6-diaminopimelate from (S)-tetrahydrodipicolinate (acetylase route): step 3/3. Its function is as follows. Catalyzes the conversion of N-acetyl-diaminopimelate to diaminopimelate and acetate. The protein is N-acetyldiaminopimelate deacetylase of Exiguobacterium sibiricum (strain DSM 17290 / CCUG 55495 / CIP 109462 / JCM 13490 / 255-15).